Here is a 454-residue protein sequence, read N- to C-terminus: Macrophage scavenger receptor types I and II (454 aa).

Residues 1–22 are disordered; that stretch reads MAQWDSFTDQQEDTDSCSESVK. The Cytoplasmic segment spans residues 1 to 50; the sequence is MAQWDSFTDQQEDTDSCSESVKFDARSNTALLPPNPKNGPPLQEKLKSFK. Position 27 is a phosphoserine (S27). Residues 51 to 73 form a helical; Signal-anchor for type II membrane protein membrane-spanning segment; it reads AALIALYLLVFAVLIPIIAIMAA. Residues 74–109 form a spacer region; that stretch reads QLLKWEMKNCTVGSINANSVSSSLLGRGNDSEHEVR. At 74-454 the chain is on the extracellular side; sequence QLLKWEMKNC…GEDAGVTCTL (381 aa). Residues N82, N102, N143, N184, N221, N249, and N267 are each glycosylated (N-linked (GlcNAc...) asparagine). Residues 199–256 are a coiled coil; the sequence is VKFQENTLKGQEEISKLKERVHNASAEIMSMKEEQVHLEQEIKREVKVLNNITNDLRL. The interval 267-347 is disordered; the sequence is NITLIQGPPG…KGEKGSGSIL (81 aa). Residues 273–344 form the Collagen-like domain; it reads GPPGPPGEKG…KGQKGEKGSG (72 aa). Residues 353-453 enclose the SRCR domain; it reads VRLVGGRGPH…HGEDAGVTCT (101 aa). 3 disulfides stabilise this stretch: C378–C442, C391–C452, and C422–C432.

In terms of assembly, homotrimer. Interacts with MYO18A.

The protein localises to the membrane. Membrane glycoproteins implicated in the pathologic deposition of cholesterol in arterial walls during atherogenesis. Two types of receptor subunits exist. These receptors mediate the endocytosis of a diverse group of macromolecules, including modified low density lipoproteins (LDL). The chain is Macrophage scavenger receptor types I and II (MSR1) from Oryctolagus cuniculus (Rabbit).